We begin with the raw amino-acid sequence, 1075 residues long: Protein EXPORTIN 1A (1075 aa).

One can recognise an Importin N-terminal domain in the interval 37 to 103 (ADQILRDLQA…KNYISEVIVQ (67 aa)). 12 HEAT repeats span residues 91–130 (DGMK…QIVK), 135–171 (AKWT…EVFD), 232–267 (IFES…LNFG), 336–373 (SLLL…ELFD), 388–425 (MGLQ…LMIN), 474–513 (DTEK…SMAE), 563–600 (KFLK…KCKR), 612–649 (PFVS…AESD), 682–719 (LKDQ…IFLD), 756–793 (RETL…DYAR), 798–835 (ARES…CTLE), and 894–934 (ETGL…VLTD).

It belongs to the exportin family. In terms of assembly, interacts with RAN1. Expressed ubiquitously, with higher levels in stems, inflorescences and roots. Present in mature pollen grains, unpollinated pistils, and 2-week-old seedlings.

The protein resides in the nucleus. The protein localises to the nuclear pore complex. It is found in the nucleus membrane. Receptor for the leucine-rich nuclear export signal (NES). Binds cooperatively to the NES on its target protein and to the small GTPase Ran in its active GTP-bound form. Required for the maternal-to-embryonic transition and during gametophyte development. Involved in heat-induced oxidative stress basal resistance. The sequence is that of Protein EXPORTIN 1A from Arabidopsis thaliana (Mouse-ear cress).